The chain runs to 308 residues: Ribonuclease Z (308 aa).

Positions 60, 62, 64, 65, 140, 209, and 269 each coordinate Zn(2+). Catalysis depends on Asp64, which acts as the Proton acceptor.

This sequence belongs to the RNase Z family. Homodimer. Requires Zn(2+) as cofactor.

It carries out the reaction Endonucleolytic cleavage of RNA, removing extra 3' nucleotides from tRNA precursor, generating 3' termini of tRNAs. A 3'-hydroxy group is left at the tRNA terminus and a 5'-phosphoryl group is left at the trailer molecule.. Its function is as follows. Zinc phosphodiesterase, which displays some tRNA 3'-processing endonuclease activity. Probably involved in tRNA maturation, by removing a 3'-trailer from precursor tRNA. The chain is Ribonuclease Z from Methanococcus maripaludis (strain C6 / ATCC BAA-1332).